The following is a 589-amino-acid chain: O-fucosyltransferase 11 (589 aa).

The tract at residues 1-37 is disordered; sequence MKSKIHHQPNGSNNGVVSSNDNGCRSESPSPPLSPNR. A compositionally biased stretch (low complexity) spans 10–23; it reads NGSNNGVVSSNDNG. Residues 68–88 traverse the membrane as a helical; Signal-anchor for type II membrane protein segment; it reads MIYASGLLMCVGPFSGLVGWV. N-linked (GlcNAc...) asparagine glycans are attached at residues Asn112, Asn136, and Asn239. 332-334 contacts substrate; the sequence is HLR. N-linked (GlcNAc...) asparagine glycans are attached at residues Asn405, Asn406, and Asn564.

It belongs to the glycosyltransferase GT106 family.

The protein localises to the membrane. It participates in glycan metabolism. The protein is O-fucosyltransferase 11 of Arabidopsis thaliana (Mouse-ear cress).